The following is a 180-amino-acid chain: MSNGIVAKRYAVALFKIAKEKHVLEMFEEELRLVQNVFTKNGELHSFLTQPNISKEQKKTFLANVFASVSESILNTLYILIDNKRIDILPEIANEYVVLANEERNVADATVYSIRLLSEEEKLNIAEAFAKKTGKDAIRVKNVVDEDLLGGIKVRIGNRIYDGSLQGKLARIQRELMKNR.

Belongs to the ATPase delta chain family. In terms of assembly, F-type ATPases have 2 components, F(1) - the catalytic core - and F(0) - the membrane proton channel. F(1) has five subunits: alpha(3), beta(3), gamma(1), delta(1), epsilon(1). F(0) has three main subunits: a(1), b(2) and c(10-14). The alpha and beta chains form an alternating ring which encloses part of the gamma chain. F(1) is attached to F(0) by a central stalk formed by the gamma and epsilon chains, while a peripheral stalk is formed by the delta and b chains.

The protein localises to the cell membrane. F(1)F(0) ATP synthase produces ATP from ADP in the presence of a proton or sodium gradient. F-type ATPases consist of two structural domains, F(1) containing the extramembraneous catalytic core and F(0) containing the membrane proton channel, linked together by a central stalk and a peripheral stalk. During catalysis, ATP synthesis in the catalytic domain of F(1) is coupled via a rotary mechanism of the central stalk subunits to proton translocation. In terms of biological role, this protein is part of the stalk that links CF(0) to CF(1). It either transmits conformational changes from CF(0) to CF(1) or is implicated in proton conduction. The protein is ATP synthase subunit delta of Bacillus mycoides (strain KBAB4) (Bacillus weihenstephanensis).